A 466-amino-acid polypeptide reads, in one-letter code: UDP-glycosyltransferase 91B1 (466 aa).

UDP-alpha-D-glucose is bound by residues T286, 342 to 344 (VPQ), 359 to 367 (HCGWGSAVE), and 381 to 384 (NLDQ).

It belongs to the UDP-glycosyltransferase family.

This is UDP-glycosyltransferase 91B1 (UGT91B1) from Arabidopsis thaliana (Mouse-ear cress).